Consider the following 152-residue polypeptide: Lipoprotein signal peptidase (152 aa).

The next 3 membrane-spanning stretches (helical) occupy residues 5–25 (LFVL…FWIV), 61–81 (WFFV…LATH), and 84–104 (LNIW…GNFI). Active-site residues include Asp114 and Asp130. The helical transmembrane segment at 125–145 (IFNVADSYLTVGVILLVICLW) threads the bilayer.

This sequence belongs to the peptidase A8 family.

Its subcellular location is the cell membrane. It catalyses the reaction Release of signal peptides from bacterial membrane prolipoproteins. Hydrolyzes -Xaa-Yaa-Zaa-|-(S,diacylglyceryl)Cys-, in which Xaa is hydrophobic (preferably Leu), and Yaa (Ala or Ser) and Zaa (Gly or Ala) have small, neutral side chains.. The protein operates within protein modification; lipoprotein biosynthesis (signal peptide cleavage). In terms of biological role, this protein specifically catalyzes the removal of signal peptides from prolipoproteins. This Streptococcus pyogenes serotype M6 (strain ATCC BAA-946 / MGAS10394) protein is Lipoprotein signal peptidase.